We begin with the raw amino-acid sequence, 523 residues long: Bifunctional purine biosynthesis protein PurH (523 aa).

One can recognise an MGS-like domain in the interval 1–150 (MSDVVPVRNA…KNHGDVAIAT (150 aa)).

Belongs to the PurH family.

It carries out the reaction (6R)-10-formyltetrahydrofolate + 5-amino-1-(5-phospho-beta-D-ribosyl)imidazole-4-carboxamide = 5-formamido-1-(5-phospho-D-ribosyl)imidazole-4-carboxamide + (6S)-5,6,7,8-tetrahydrofolate. The enzyme catalyses IMP + H2O = 5-formamido-1-(5-phospho-D-ribosyl)imidazole-4-carboxamide. Its pathway is purine metabolism; IMP biosynthesis via de novo pathway; 5-formamido-1-(5-phospho-D-ribosyl)imidazole-4-carboxamide from 5-amino-1-(5-phospho-D-ribosyl)imidazole-4-carboxamide (10-formyl THF route): step 1/1. It functions in the pathway purine metabolism; IMP biosynthesis via de novo pathway; IMP from 5-formamido-1-(5-phospho-D-ribosyl)imidazole-4-carboxamide: step 1/1. The chain is Bifunctional purine biosynthesis protein PurH from Rhodopirellula baltica (strain DSM 10527 / NCIMB 13988 / SH1).